A 206-amino-acid polypeptide reads, in one-letter code: Large ribosomal subunit protein uL4 (206 aa).

The segment at 47–94 is disordered; the sequence is NRAQKGRAEVSKSTRKPWRQKGTGRARAGMASSPLWRGGGRVFPNSPE. Positions 59-70 are enriched in basic residues; it reads STRKPWRQKGTG.

This sequence belongs to the universal ribosomal protein uL4 family. In terms of assembly, part of the 50S ribosomal subunit.

Functionally, one of the primary rRNA binding proteins, this protein initially binds near the 5'-end of the 23S rRNA. It is important during the early stages of 50S assembly. It makes multiple contacts with different domains of the 23S rRNA in the assembled 50S subunit and ribosome. In terms of biological role, forms part of the polypeptide exit tunnel. The protein is Large ribosomal subunit protein uL4 of Aromatoleum aromaticum (strain DSM 19018 / LMG 30748 / EbN1) (Azoarcus sp. (strain EbN1)).